An 860-amino-acid chain; its full sequence is DNA mismatch repair protein MutS (860 aa).

ATP is bound at residue 618–625 (GPNMGGKS).

The protein belongs to the DNA mismatch repair MutS family.

In terms of biological role, this protein is involved in the repair of mismatches in DNA. It is possible that it carries out the mismatch recognition step. This protein has a weak ATPase activity. This Hahella chejuensis (strain KCTC 2396) protein is DNA mismatch repair protein MutS.